The primary structure comprises 104 residues: Large ribosomal subunit protein bL21 (104 aa).

It belongs to the bacterial ribosomal protein bL21 family. In terms of assembly, part of the 50S ribosomal subunit. Contacts protein L20.

Functionally, this protein binds to 23S rRNA in the presence of protein L20. The polypeptide is Large ribosomal subunit protein bL21 (Clostridium tetani (strain Massachusetts / E88)).